We begin with the raw amino-acid sequence, 245 residues long: Ribosomal RNA small subunit methyltransferase G (245 aa).

Residues Gly85, Phe90, 108–110 (DST), 136–137 (AE), and Arg155 contribute to the S-adenosyl-L-methionine site.

This sequence belongs to the methyltransferase superfamily. RNA methyltransferase RsmG family.

It is found in the cytoplasm. In terms of biological role, specifically methylates the N7 position of a guanine in 16S rRNA. In Nostoc sp. (strain PCC 7120 / SAG 25.82 / UTEX 2576), this protein is Ribosomal RNA small subunit methyltransferase G.